A 406-amino-acid chain; its full sequence is Tryptophan synthase beta chain (406 aa).

K97 is modified (N6-(pyridoxal phosphate)lysine).

Belongs to the TrpB family. As to quaternary structure, tetramer of two alpha and two beta chains. It depends on pyridoxal 5'-phosphate as a cofactor.

It carries out the reaction (1S,2R)-1-C-(indol-3-yl)glycerol 3-phosphate + L-serine = D-glyceraldehyde 3-phosphate + L-tryptophan + H2O. Its pathway is amino-acid biosynthesis; L-tryptophan biosynthesis; L-tryptophan from chorismate: step 5/5. Functionally, the beta subunit is responsible for the synthesis of L-tryptophan from indole and L-serine. This chain is Tryptophan synthase beta chain, found in Lacticaseibacillus casei (strain BL23) (Lactobacillus casei).